The chain runs to 319 residues: Acetyl-coenzyme A carboxylase carboxyl transferase subunit alpha (319 aa).

The CoA carboxyltransferase C-terminal domain maps to 35 to 296; that stretch reads NIDEEVHRLR…KAQLLEDLAD (262 aa).

This sequence belongs to the AccA family. Acetyl-CoA carboxylase is a heterohexamer composed of biotin carboxyl carrier protein (AccB), biotin carboxylase (AccC) and two subunits each of ACCase subunit alpha (AccA) and ACCase subunit beta (AccD).

Its subcellular location is the cytoplasm. It carries out the reaction N(6)-carboxybiotinyl-L-lysyl-[protein] + acetyl-CoA = N(6)-biotinyl-L-lysyl-[protein] + malonyl-CoA. It participates in lipid metabolism; malonyl-CoA biosynthesis; malonyl-CoA from acetyl-CoA: step 1/1. Component of the acetyl coenzyme A carboxylase (ACC) complex. First, biotin carboxylase catalyzes the carboxylation of biotin on its carrier protein (BCCP) and then the CO(2) group is transferred by the carboxyltransferase to acetyl-CoA to form malonyl-CoA. The sequence is that of Acetyl-coenzyme A carboxylase carboxyl transferase subunit alpha from Salmonella dublin (strain CT_02021853).